Consider the following 135-residue polypeptide: MFQNLQGTFEKEIGKIIPFTIAFKRAEAVEPDGCVQSWRCCLPCDLGQASRFIHTTVCSAIRWRSCKGERNFAERHILPAELEEQSNHAGMGPILPAMPSVDGNHFQHPAGDCHPYGILCLQAHSASVTARQVLQ.

This is an uncharacterized protein from Homo sapiens (Human).